A 499-amino-acid polypeptide reads, in one-letter code: Rhamnogalacturonate lyase A (499 aa).

An N-terminal signal peptide occupies residues 1 to 20 (MLSKTSLLSLLSLAAGVVNA). Cystine bridges form between Cys-49–Cys-92 and Cys-183–Cys-192.

It belongs to the polysaccharide lyase 4 family.

Its subcellular location is the secreted. The catalysed reaction is Endotype eliminative cleavage of L-alpha-rhamnopyranosyl-(1-&gt;4)-alpha-D-galactopyranosyluronic acid bonds of rhamnogalacturonan I domains in ramified hairy regions of pectin leaving L-rhamnopyranose at the reducing end and 4-deoxy-4,5-unsaturated D-galactopyranosyluronic acid at the non-reducing end.. Pectinolytic enzymes consist of four classes of enzymes: pectin lyase, polygalacturonase, pectin methylesterase and rhamnogalacturonase. Degrades the rhamnogalacturonan I (RG-I) backbone of pectin. In Aspergillus niger, this protein is Rhamnogalacturonate lyase A (rglA).